The primary structure comprises 43 residues: Histone H3 (43 aa).

As to quaternary structure, the nucleosome is a histone octamer containing two molecules each of H2A, H2B, H3 and H4 assembled in one H3-H4 heterotetramer and two H2A-H2B heterodimers. The octamer wraps approximately 147 bp of DNA.

It is found in the nucleus. It localises to the chromosome. Its function is as follows. Core component of nucleosome. Nucleosomes wrap and compact DNA into chromatin, limiting DNA accessibility to the cellular machineries which require DNA as a template. Histones thereby play a central role in transcription regulation, DNA repair, DNA replication and chromosomal stability. DNA accessibility is regulated via a complex set of post-translational modifications of histones, also called histone code, and nucleosome remodeling. This Penaeus vannamei (Whiteleg shrimp) protein is Histone H3.